A 536-amino-acid chain; its full sequence is Lysosomal acid glucosylceramidase (536 aa).

An N-terminal signal peptide occupies residues Met1 to Gly39. Intrachain disulfides connect Cys43–Cys55 and Cys57–Cys62. N-linked (GlcNAc...) asparagine glycosylation is found at Asn58, Asn98, and Asn185. Glu274 acts as the Proton donor in catalysis. An N-linked (GlcNAc...) asparagine glycan is attached at Asn309. Catalysis depends on Glu379, which acts as the Nucleophile. An N-linked (GlcNAc...) asparagine glycan is attached at Asn501.

This sequence belongs to the glycosyl hydrolase 30 family. As to quaternary structure, interacts with saposin-C. Interacts with SCARB2. Interacts with TCP1. May interacts with SNCA; this interaction may inhibit the glucosylceramidase activity. Interacts with GRN; this interaction prevents aggregation of GBA1-SCARB2 complex via interaction with HSPA1A upon stress.

The protein resides in the lysosome membrane. It carries out the reaction a beta-D-glucosyl-(1&lt;-&gt;1')-N-acylsphing-4-enine + H2O = an N-acylsphing-4-enine + D-glucose. The enzyme catalyses a beta-D-galactosyl-(1&lt;-&gt;1')-N-acylsphing-4-enine + H2O = an N-acylsphing-4-enine + D-galactose. The catalysed reaction is cholesteryl 3-beta-D-glucoside + H2O = cholesterol + D-glucose. It catalyses the reaction a beta-D-glucosyl-(1&lt;-&gt;1')-N-acylsphing-4-enine + cholesterol = cholesteryl 3-beta-D-glucoside + an N-acylsphing-4-enine. It carries out the reaction beta-D-glucosyl-N-(9Z-octadecenoyl)-sphing-4E-enine + cholesterol = N-(9Z-octadecenoyl)-sphing-4-enine + cholesteryl 3-beta-D-glucoside. The enzyme catalyses beta-D-glucosyl-(1&lt;-&gt;1')-N-hexadecanoylsphing-4-enine + cholesterol = cholesteryl 3-beta-D-glucoside + N-hexadecanoylsphing-4-enine. The catalysed reaction is beta-D-glucosyl-N-octanoylsphing-4E-enine + cholesterol = N-octanoylsphing-4-enine + cholesteryl 3-beta-D-glucoside. It catalyses the reaction beta-D-glucosyl-N-dodecanoylsphing-4-enine + cholesterol = N-dodecanoylsphing-4-enine + cholesteryl 3-beta-D-glucoside. It carries out the reaction beta-D-glucosyl-(1&lt;-&gt;1)-N-octadecanoylsphing-4-enine + cholesterol = N-octadecanoylsphing-4-enine + cholesteryl 3-beta-D-glucoside. The enzyme catalyses beta-D-glucosyl-(1&lt;-&gt;1')-N-(15Z-tetracosenoyl)-sphing-4-enine + cholesterol = N-(15Z-tetracosenoyl)-sphing-4-enine + cholesteryl 3-beta-D-glucoside. The catalysed reaction is a beta-D-galactosyl-(1&lt;-&gt;1')-N-acylsphing-4-enine + cholesterol = cholesteryl 3-beta-D-galactoside + an N-acylsphing-4-enine. It catalyses the reaction 1-(beta-D-galactosyl)-N-dodecanoylsphing-4-enine + cholesterol = cholesteryl 3-beta-D-galactoside + N-dodecanoylsphing-4-enine. It carries out the reaction a beta-D-xylosyl-(1&lt;-&gt;1')-N-acylsphing-4-enine + cholesterol = cholesteryl 3-beta-D-xyloside + an N-acylsphing-4-enine. The enzyme catalyses beta-D-xylosyl-(1&lt;-&gt;1')-N-(9Z-octadecenoyl)-sphing-4-enine + cholesterol = cholesteryl 3-beta-D-xyloside + N-(9Z-octadecenoyl)-sphing-4-enine. Its pathway is steroid metabolism; cholesterol metabolism. The protein operates within sphingolipid metabolism. Synergistically activated by saposin-A and saposin-C, two saposin peptides produced by proteolytic processing of prosaposin/PSAP. Saposin-C activates GBA1 through its recruitment to membranes. The membrane structure and composition in anionic phospholipids are also important for the activation. Activated by PKC in the salvage pathway of ceramide formation. Inhibited by conduritol B epoxide/CBE. Glucosylceramidase that catalyzes, within the lysosomal compartment, the hydrolysis of glucosylceramides/GlcCers (such as beta-D-glucosyl-(1&lt;-&gt;1')-N-acylsphing-4-enine) into free ceramides (such as N-acylsphing-4-enine) and glucose. Plays a central role in the degradation of complex lipids and the turnover of cellular membranes. Through the production of ceramides, participates in the PKC-activated salvage pathway of ceramide formation. Catalyzes the glucosylation of cholesterol, through a transglucosylation reaction where glucose is transferred from GlcCer to cholesterol. GlcCer containing mono-unsaturated fatty acids (such as beta-D-glucosyl-N-(9Z-octadecenoyl)-sphing-4-enine) are preferred as glucose donors for cholesterol glucosylation when compared with GlcCer containing same chain length of saturated fatty acids (such as beta-D-glucosyl-N-octadecanoyl-sphing-4-enine). Under specific conditions, may alternatively catalyze the reverse reaction, transferring glucose from cholesteryl 3-beta-D-glucoside to ceramide. Can also hydrolyze cholesteryl 3-beta-D-glucoside producing glucose and cholesterol. Catalyzes the hydrolysis of galactosylceramides/GalCers (such as beta-D-galactosyl-(1&lt;-&gt;1')-N-acylsphing-4-enine), as well as the transfer of galactose between GalCers and cholesterol in vitro, but with lower activity than with GlcCers. Contrary to GlcCer and GalCer, xylosylceramide/XylCer (such as beta-D-xyosyl-(1&lt;-&gt;1')-N-acylsphing-4-enine) is not a good substrate for hydrolysis, however it is a good xylose donor for transxylosylation activity to form cholesteryl 3-beta-D-xyloside. This chain is Lysosomal acid glucosylceramidase, found in Homo sapiens (Human).